Reading from the N-terminus, the 515-residue chain is MPSLENSTQNEARLLLVSNRLPITIKRSEDGKYDFSMSSGGLVSGLSGLSKSTTFQWYGWPGLEVPEEEIPVVKQRLKDEYGAIPVFIDDELADRHYNGFSNSILWPLFHYHPGEITFDESAWEAYKEANRLFAKAVAKEVQDGDLIWVHDYHLMLLPEMLREEIGDSKENVKIGFFLHTPFPSSEIYRILPVRNELLLGVLHCDLIGFHTYDYTRHFLSACSRLLGLATTPNGIEFQGKVIACGAFPIGIDPEKFQEGLKKEKVQKRIAQLEQKFQGVKLMVGVDRLDYIKGVPQKLHALEVFLSDHPEWVGKVVLVQVAVPSRQDVEEYQNLRAVVNELVGRINGKFGTVEFMPIHFLHKSVNFDELIALYAVSDACIVSSTRDGMNLVAYEYIASQQKRHGVLVLSEFAGAAQSLNGSIIINPWNTEELAGAYQEAVTMSDEQRALNFSKLDKYVNKYTSAFWGQSFVTELNRISAHSAGKFQSRKAKLPESADAEKPMNGSGESEESQTTQ.

Y97 and D151 together coordinate D-glucose 6-phosphate. 2 residues coordinate UDP: R287 and K292. The UDP-alpha-D-glucose site is built by R287 and K292. R325 contacts D-glucose 6-phosphate. Residues V364 and 390-394 (LVAYE) contribute to the UDP site. 386 to 394 (DGMNLVAYE) contributes to the UDP-alpha-D-glucose binding site. The interval 483–515 (GKFQSRKAKLPESADAEKPMNGSGESEESQTTQ) is disordered. The segment covering 491–500 (KLPESADAEK) has biased composition (basic and acidic residues).

The protein belongs to the glycosyltransferase 20 family.

It carries out the reaction D-glucose 6-phosphate + UDP-alpha-D-glucose = alpha,alpha-trehalose 6-phosphate + UDP + H(+). It participates in carbohydrate biosynthesis. Functionally, synthase catalytic subunit of the trehalose synthase complex that catalyzes the production of trehalose from glucose-6-phosphate and UDP-alpha-D-glucose in a two step process. The disaccharide trehalose serves as a storage carbohydrate that is mobilized during conidial germination. Regulates the level of trehalose as a protectant for cell integrity during thermal and oxidative stress. The chain is Alpha,alpha-trehalose-phosphate synthase [UDP-forming] 1 from Aspergillus fumigatus (strain ATCC MYA-4609 / CBS 101355 / FGSC A1100 / Af293) (Neosartorya fumigata).